A 518-amino-acid polypeptide reads, in one-letter code: Cytochrome P450 82E3 (518 aa).

The helical transmembrane segment at 2-22 threads the bilayer; that stretch reads VFPVEAIVGLVTFTFLFYFLW. K254 is covalently cross-linked (Glycyl lysine isopeptide (Lys-Gly) (interchain with G-Cter in ubiquitin)). C458 contacts heme.

Belongs to the cytochrome P450 family. CYP82E2 subfamily. It depends on heme as a cofactor. In terms of tissue distribution, expressed at low levels in green leaves.

It is found in the membrane. Its pathway is alkaloid biosynthesis; nicotine biosynthesis. In terms of biological role, no nicotine N-demethylase activity. This is Cytochrome P450 82E3 from Nicotiana tabacum (Common tobacco).